A 150-amino-acid polypeptide reads, in one-letter code: Catabolic 3-dehydroquinase (150 aa).

The active-site Proton acceptor is the Y24. 3 residues coordinate substrate: N75, H81, and D88. Residue H101 is the Proton donor of the active site. Residues 102–103 (VS) and R112 contribute to the substrate site.

Belongs to the type-II 3-dehydroquinase family. In terms of assembly, homododecamer. Adopts a ring-like structure, composed of an arrangement of two hexameric rings stacked on top of one another.

The enzyme catalyses 3-dehydroquinate = 3-dehydroshikimate + H2O. Its pathway is aromatic compound metabolism; 3,4-dihydroxybenzoate biosynthesis; 3,4-dihydroxybenzoate from 3-dehydroquinate: step 1/2. Is involved in the catabolism of quinate. Allows the utilization of quinate as carbon source via the beta-ketoadipate pathway. This is Catabolic 3-dehydroquinase from Aspergillus clavatus (strain ATCC 1007 / CBS 513.65 / DSM 816 / NCTC 3887 / NRRL 1 / QM 1276 / 107).